Here is a 414-residue protein sequence, read N- to C-terminus: HERV-H LTR-associating protein 2 (414 aa).

The N-terminal stretch at 1 to 22 (MKAQTALSFFLILITSLSGSQG) is a signal peptide. In terms of domain architecture, Ig-like V-type 1 spans 61-131 (IHWKYQDSYK…YVGTAIQVIT (71 aa)). N90 and N103 each carry an N-linked (GlcNAc...) asparagine glycan. The Ig-like C1-type domain maps to 138 to 222 (VGVFLTPVMK…ENSLLKQTWT (85 aa)). Disulfide bonds link C159-C210 and C243-C317. Residues 235 to 328 (QSEHVSLSCQ…ISSDEYTLLT (94 aa)) enclose the Ig-like V-type 2 domain. N-linked (GlcNAc...) asparagine glycosylation is present at N318. Residues 345–365 (KGLWILVPSAILAAFLLIWSV) traverse the membrane as a helical segment. The segment at 383–414 (GAQQERCCVPPGERCPSAPDNGEENVPLSGKV) is disordered.

As to quaternary structure, interacts with TMIGD2. Expressed at high levels in colon, kidney, testis, lung and pancreas, and at lower levels in small intestine, liver and skeletal muscle. In immune cells, highly expressed in B-cells, dendritic cells and macrophages. Not detected in T-cells.

It localises to the membrane. In terms of biological role, through interaction with TMIGD2, costimulates T-cells in the context of TCR-mediated activation. Enhances T-cell proliferation and cytokine production via an AKT-dependent signaling cascade. In Homo sapiens (Human), this protein is HERV-H LTR-associating protein 2 (HHLA2).